The primary structure comprises 868 residues: Hopanoid transporter HpnN (868 aa).

12 helical membrane-spanning segments follow: residues 16-36 (FAAF…FYTY), 273-293 (GAVV…WMAL), 298-318 (IIFA…AVGL), 326-346 (LLSI…GIQF), 370-390 (YSAV…LSFL), 403-423 (IAGA…PALL), 452-472 (IAII…LYFM), 710-730 (IVAS…ILLW), 740-760 (ALTL…CVLI), 762-782 (LPLN…GVAF), 805-825 (AIFF…LSSH), and 834-854 (LLAL…PALM). Residues 299 to 425 (IFAVAANLVI…ITVLPALLKL (127 aa)) form the SSD domain.

It belongs to the resistance-nodulation-cell division (RND) (TC 2.A.6) family. MmpL subfamily.

It localises to the cell inner membrane. Functionally, essential for hopanoid transport from the cytoplasmic to the outer membrane. Required for the C(35) hopanoid, bacteriohopanetetrol, to remain localized to the mother cell type. This chain is Hopanoid transporter HpnN, found in Rhodopseudomonas palustris (strain TIE-1).